The sequence spans 380 residues: Cytochrome b (380 aa).

4 consecutive transmembrane segments (helical) span residues leucine 33 to methionine 53, tryptophan 77 to isoleucine 98, tryptophan 113 to leucine 133, and phenylalanine 178 to leucine 198. Heme b-binding residues include histidine 83 and histidine 97. Heme b-binding residues include histidine 182 and histidine 196. Histidine 201 contributes to the a ubiquinone binding site. The next 4 membrane-spanning stretches (helical) occupy residues threonine 226–serine 246, leucine 288–histidine 308, leucine 320–glycine 340, and phenylalanine 347–proline 367.

This sequence belongs to the cytochrome b family. As to quaternary structure, the cytochrome bc1 complex contains 11 subunits: 3 respiratory subunits (MT-CYB, CYC1 and UQCRFS1), 2 core proteins (UQCRC1 and UQCRC2) and 6 low-molecular weight proteins (UQCRH/QCR6, UQCRB/QCR7, UQCRQ/QCR8, UQCR10/QCR9, UQCR11/QCR10 and a cleavage product of UQCRFS1). This cytochrome bc1 complex then forms a dimer. Heme b is required as a cofactor.

Its subcellular location is the mitochondrion inner membrane. Its function is as follows. Component of the ubiquinol-cytochrome c reductase complex (complex III or cytochrome b-c1 complex) that is part of the mitochondrial respiratory chain. The b-c1 complex mediates electron transfer from ubiquinol to cytochrome c. Contributes to the generation of a proton gradient across the mitochondrial membrane that is then used for ATP synthesis. The sequence is that of Cytochrome b (MT-CYB) from Nomascus leucogenys (Northern white-cheeked gibbon).